Consider the following 148-residue polypeptide: Snaclec B3/B5 (148 aa).

The N-terminal stretch at Met1–Ala24 is a signal peptide. Intrachain disulfides connect Cys27/Cys38, Cys55/Cys144, and Cys121/Cys136. The region spanning Tyr34–Lys145 is the C-type lectin domain.

It belongs to the snaclec family. In terms of assembly, heterodimer; disulfide-linked. In terms of tissue distribution, expressed by the venom gland.

It is found in the secreted. Functionally, interferes with one step of hemostasis (modulation of platelet aggregation, or coagulation cascade, for example). The chain is Snaclec B3/B5 from Macrovipera lebetinus (Levantine viper).